We begin with the raw amino-acid sequence, 397 residues long: G2/mitotic-specific cyclin-B2 (397 aa).

Disordered stretches follow at residues 1 to 20 (MALL…DTGV) and 64 to 97 (KVTH…PEDV). Phosphothreonine is present on Thr8. Ser11 is modified (phosphoserine). Residues 64–74 (KVTHVNKQPKP) show a composition bias toward polar residues. A phosphoserine mark is found at Ser77, Ser98, and Ser391.

This sequence belongs to the cyclin family. Cyclin AB subfamily. Interacts with the CDK1 protein kinase to form a serine/threonine kinase holoenzyme complex also known as maturation promoting factor (MPF). The cyclin subunit imparts substrate specificity to the complex.

Functionally, essential for the control of the cell cycle at the G2/M (mitosis) transition. The sequence is that of G2/mitotic-specific cyclin-B2 (CCNB2) from Mesocricetus auratus (Golden hamster).